We begin with the raw amino-acid sequence, 745 residues long: 1,4-alpha-glucan branching enzyme GlgB (745 aa).

D416 acts as the Nucleophile in catalysis. E469 acts as the Proton donor in catalysis.

The protein belongs to the glycosyl hydrolase 13 family. GlgB subfamily. Monomer.

It catalyses the reaction Transfers a segment of a (1-&gt;4)-alpha-D-glucan chain to a primary hydroxy group in a similar glucan chain.. It functions in the pathway glycan biosynthesis; glycogen biosynthesis. Its function is as follows. Catalyzes the formation of the alpha-1,6-glucosidic linkages in glycogen by scission of a 1,4-alpha-linked oligosaccharide from growing alpha-1,4-glucan chains and the subsequent attachment of the oligosaccharide to the alpha-1,6 position. The polypeptide is 1,4-alpha-glucan branching enzyme GlgB (Shewanella sp. (strain MR-7)).